Consider the following 86-residue polypeptide: Large ribosomal subunit protein bL27 (86 aa).

Positions methionine 1–tyrosine 26 are disordered.

The protein belongs to the bacterial ribosomal protein bL27 family.

The sequence is that of Large ribosomal subunit protein bL27 from Marinobacter nauticus (strain ATCC 700491 / DSM 11845 / VT8) (Marinobacter aquaeolei).